The sequence spans 213 residues: Holliday junction resolvase RecU (213 aa).

Mg(2+)-binding residues include Thr99, Asp101, Glu114, and Gln133.

This sequence belongs to the RecU family. Requires Mg(2+) as cofactor.

The protein localises to the cytoplasm. The enzyme catalyses Endonucleolytic cleavage at a junction such as a reciprocal single-stranded crossover between two homologous DNA duplexes (Holliday junction).. Functionally, endonuclease that resolves Holliday junction intermediates in genetic recombination. Cleaves mobile four-strand junctions by introducing symmetrical nicks in paired strands. Promotes annealing of linear ssDNA with homologous dsDNA. Required for DNA repair, homologous recombination and chromosome segregation. The chain is Holliday junction resolvase RecU from Lactococcus lactis subsp. lactis (strain IL1403) (Streptococcus lactis).